The chain runs to 428 residues: D-amino acid dehydrogenase (428 aa).

V3–Y17 serves as a coordination point for FAD.

This sequence belongs to the DadA oxidoreductase family. FAD is required as a cofactor.

The catalysed reaction is a D-alpha-amino acid + A + H2O = a 2-oxocarboxylate + AH2 + NH4(+). The protein operates within amino-acid degradation; D-alanine degradation; NH(3) and pyruvate from D-alanine: step 1/1. Functionally, oxidative deamination of D-amino acids. The polypeptide is D-amino acid dehydrogenase (Burkholderia thailandensis (strain ATCC 700388 / DSM 13276 / CCUG 48851 / CIP 106301 / E264)).